We begin with the raw amino-acid sequence, 1013 residues long: MDCQNGRRANRTVRFARTAESRYPERYSYEYDPEETLSRAAPSMRNAPTIPPPTASGADEMRYTASRPASPARPWSPTRAADWVRPPSAAASYYERADINGSPRPGTPSSRYGGSPRRPLPPAPLFSKPGTTTQDTKIDIGDGEEDPFGGGGRTISSRHGPQGSVQSFTSESTFIADETDLEKVDLDEYEEESNETKSMVDPNLHYGPAPEKQSRRGVRNAQMAKKEVQLVNGELILECKIPTILHSFLPRRDDREFTHMRYTAVTCDPDDFTQRGYKLRQQIGRTMRETELFICITMYNEDETHFTRTMHGVMQNISHFCSRSKSRTWGKDGWKKIVVCIISDGRKKVHPRTLNALAALGVYQEGIAKNVVNQKQVNAHVYEYTTQVSLDSDLKFKGAEKGIVPCQVIFCLKEHNQKKLNSHRWFFNAFGRALQPNICILLDVGTRPEPTALYHLWKAFDQDSNVAGAAGEIKASKGKNMLGLLNPLVASQNFEYKMSNILDKPLESVFGYITVLPGALSAYRFFALQNDAEGNGPLNQYFKGETLHGKDADVFTANMYLAEDRILCWELVAKREERWVLRFVKSAVGETDVPDSIPEFISQRRRWLNGAFFAAVYSIVNVKQLWKTDHSLARKILLQIESVYQLLQLIFTYFGLANFYLAFFFIAGSLTDEKIDPFGHNMGKYIFIVLRYACVLVMCLQFIFSMGNRPQGAKKLYLSSMIVYSIVMAYTAFCTLYLIVLELMAKTGHDVPITMSDTLFVNIVVSLLSTVGLYFFTSFMYLDPWHMFTSSAQYFALLPSYICTLQCYAFCNTHDVTWGTKGDNTINTDLGTARIINGSIVEVEMPSEQLDIDSGYDAALRNLRDRLEVPDPGVSESQQQEDYYRAVRTYMVSVWMVANVVLAMAVSEVYGVGSSGTNVYLAIILWSVAVLAIIRAIGSTAYAVLYLIQKLVEGKAKFQAGNIASANASAAGSSLGTKSNVSYGSKGLNMTDRINETKWAISRGMQKAMFWKK.

A glycan (N-linked (GlcNAc...) asparagine) is linked at N10. 2 disordered regions span residues 26–83 (RYSY…AADW) and 95–218 (ERAD…RRGV). Residues 64–81 (TASRPASPARPWSPTRAA) show a composition bias toward low complexity. The span at 154–173 (TISSRHGPQGSVQSFTSEST) shows a compositional bias: polar residues. N-linked (GlcNAc...) asparagine glycosylation is found at N194 and N316. Helical transmembrane passes span 646 to 666 (LLQL…FFFI), 686 to 706 (IFIV…IFSM), 721 to 741 (MIVY…LIVL), 759 to 779 (LFVN…FTSF), and 792 to 811 (AQYF…YAFC). The N-linked (GlcNAc...) asparagine glycan is linked to N837. The next 2 membrane-spanning stretches (helical) occupy residues 892–912 (VSVW…VYGV) and 919–939 (VYLA…AIGS). Residues N967, N980, N989, and N995 are each glycosylated (N-linked (GlcNAc...) asparagine).

This sequence belongs to the chitin synthase family. Class II subfamily. As to expression, mainly expressed in the metulae, phialides, and conidia.

It is found in the cell membrane. It localises to the cell septum. The catalysed reaction is [(1-&gt;4)-N-acetyl-beta-D-glucosaminyl](n) + UDP-N-acetyl-alpha-D-glucosamine = [(1-&gt;4)-N-acetyl-beta-D-glucosaminyl](n+1) + UDP + H(+). Its function is as follows. Polymerizes chitin, a structural polymer of the cell wall and septum, by transferring the sugar moiety of UDP-GlcNAc to the non-reducing end of the growing chitin polymer. Seems not to be involved in hyphal growth, but, with chsC, chsA shares critical functions in hyphal wall integrity and differentiation. ChsA and chsC share also overlapping roles in septum formation. Invoved in the production of the asexual spores (conidia) that are formed by differentiated aerial hyphae called conidiophores. The chain is Chitin synthase A from Emericella nidulans (strain FGSC A4 / ATCC 38163 / CBS 112.46 / NRRL 194 / M139) (Aspergillus nidulans).